A 935-amino-acid polypeptide reads, in one-letter code: DNA repair protein rev1 (935 aa).

Residues 59 to 147 (SKSDLFHGLA…KILPWINYRT (89 aa)) form the BRCT domain. A compositionally biased stretch (polar residues) spans 162-178 (SKPSQPEGNLEDIQTSS). The tract at residues 162–193 (SKPSQPEGNLEDIQTSSQEEEHDNEKDKTKES) is disordered. The span at 184–193 (DNEKDKTKES) shows a compositional bias: basic and acidic residues. Residues 235–245 (FFSSSRLHHLS) form an interaction with target DNA region. Residues Arg240 and 283-287 (DFDCF) each bind dCTP. In terms of domain architecture, UmuC spans 279 to 460 (LLHVDFDCFF…LSVQDLPGVG (182 aa)). Mg(2+) contacts are provided by Asp283 and Phe284. The tract at residues 310 to 312 (IKN) is interaction with target DNA. DCTP is bound by residues 317–323 (SCNYEAR), Asn329, and Asp378. Residues Asp378 and Glu379 each contribute to the Mg(2+) site. 2 interaction with target DNA regions span residues 460 to 463 (GSSQ) and 517 to 525 (RRSISVDVN).

It belongs to the DNA polymerase type-Y family. Mg(2+) serves as cofactor.

It is found in the nucleus. The protein resides in the nucleolus. It localises to the mitochondrion. Its subcellular location is the cytoplasm. The protein localises to the cytoskeleton. It is found in the spindle. Functionally, deoxycytidyl transferase involved in DNA repair. Transfers a dCMP residue from dCTP to the 3'-end of a DNA primer in a template-dependent reaction. May assist in the first step in the bypass of abasic lesions by the insertion of a nucleotide opposite the lesion. Required for normal induction of mutations by physical and chemical agents. Involved in mitochondrial DNA mutagenesis. In Schizosaccharomyces pombe (strain 972 / ATCC 24843) (Fission yeast), this protein is DNA repair protein rev1.